The primary structure comprises 224 residues: Peptidyl-prolyl cis-trans isomerase CYP21-1 (224 aa).

Positions 1 to 27 are cleaved as a signal peptide; it reads MRREISFLLQPRCLLLLVALTIFLVFA. One can recognise a PPIase cyclophilin-type domain in the interval 50-214; that stretch reads FLDVDIDGQR…KKVVIADSGE (165 aa). An N-linked (GlcNAc...) asparagine glycan is attached at asparagine 158.

This sequence belongs to the cyclophilin-type PPIase family. Ubiquitous.

The protein localises to the endoplasmic reticulum. It catalyses the reaction [protein]-peptidylproline (omega=180) = [protein]-peptidylproline (omega=0). PPIases accelerate the folding of proteins. It catalyzes the cis-trans isomerization of proline imidic peptide bonds in oligopeptides. The sequence is that of Peptidyl-prolyl cis-trans isomerase CYP21-1 (CYP21-1) from Arabidopsis thaliana (Mouse-ear cress).